Reading from the N-terminus, the 227-residue chain is Cytochrome c oxidase subunit 2 (227 aa).

Topologically, residues 1–14 (MPYPLQLGLQDATS) are mitochondrial intermembrane. The helical transmembrane segment at 15–45 (PIMEELTHFHDHTLMIVFLISSLVLYIISSM) threads the bilayer. Topologically, residues 46 to 59 (LTTKLTHTSTMDAQ) are mitochondrial matrix. Residues 60–87 (EVETIWTILPAMILILIALPSLRILYMM) form a helical membrane-spanning segment. Topologically, residues 88–227 (DEINDPSLTV…YFEDWSASLL (140 aa)) are mitochondrial intermembrane. Residues H161, C196, E198, C200, H204, and M207 each contribute to the Cu cation site. Mg(2+) is bound at residue E198.

Belongs to the cytochrome c oxidase subunit 2 family. As to quaternary structure, component of the cytochrome c oxidase (complex IV, CIV), a multisubunit enzyme composed of 14 subunits. The complex is composed of a catalytic core of 3 subunits MT-CO1, MT-CO2 and MT-CO3, encoded in the mitochondrial DNA, and 11 supernumerary subunits COX4I, COX5A, COX5B, COX6A, COX6B, COX6C, COX7A, COX7B, COX7C, COX8 and NDUFA4, which are encoded in the nuclear genome. The complex exists as a monomer or a dimer and forms supercomplexes (SCs) in the inner mitochondrial membrane with NADH-ubiquinone oxidoreductase (complex I, CI) and ubiquinol-cytochrome c oxidoreductase (cytochrome b-c1 complex, complex III, CIII), resulting in different assemblies (supercomplex SCI(1)III(2)IV(1) and megacomplex MCI(2)III(2)IV(2)). Found in a complex with TMEM177, COA6, COX18, COX20, SCO1 and SCO2. Interacts with TMEM177 in a COX20-dependent manner. Interacts with COX20. Interacts with COX16. Cu cation serves as cofactor.

The protein resides in the mitochondrion inner membrane. The catalysed reaction is 4 Fe(II)-[cytochrome c] + O2 + 8 H(+)(in) = 4 Fe(III)-[cytochrome c] + 2 H2O + 4 H(+)(out). Functionally, component of the cytochrome c oxidase, the last enzyme in the mitochondrial electron transport chain which drives oxidative phosphorylation. The respiratory chain contains 3 multisubunit complexes succinate dehydrogenase (complex II, CII), ubiquinol-cytochrome c oxidoreductase (cytochrome b-c1 complex, complex III, CIII) and cytochrome c oxidase (complex IV, CIV), that cooperate to transfer electrons derived from NADH and succinate to molecular oxygen, creating an electrochemical gradient over the inner membrane that drives transmembrane transport and the ATP synthase. Cytochrome c oxidase is the component of the respiratory chain that catalyzes the reduction of oxygen to water. Electrons originating from reduced cytochrome c in the intermembrane space (IMS) are transferred via the dinuclear copper A center (CU(A)) of subunit 2 and heme A of subunit 1 to the active site in subunit 1, a binuclear center (BNC) formed by heme A3 and copper B (CU(B)). The BNC reduces molecular oxygen to 2 water molecules using 4 electrons from cytochrome c in the IMS and 4 protons from the mitochondrial matrix. This Dugong dugon (Dugong) protein is Cytochrome c oxidase subunit 2 (MT-CO2).